Consider the following 108-residue polypeptide: Protein YcgL (108 aa).

The YcgL domain occupies 12 to 96; sequence MFCVIYRSSK…SPEDLLKQHL (85 aa).

The sequence is that of Protein YcgL from Shigella dysenteriae serotype 1 (strain Sd197).